The chain runs to 611 residues: Actin-related protein 5 (611 aa).

Coiled coils occupy residues 290-329 (TLTS…LDRL) and 355-386 (SAEE…NIEV).

It belongs to the actin family. ARP5 subfamily. As to quaternary structure, component of the chromatin remodeling INO80 complex.

The protein localises to the nucleus. Functionally, proposed core component of the chromatin remodeling INO80 complex which is involved in transcriptional regulation, DNA replication and probably DNA repair. This Gallus gallus (Chicken) protein is Actin-related protein 5 (ACTR5).